Consider the following 193-residue polypeptide: Large ribosomal subunit protein bL25 (193 aa).

Belongs to the bacterial ribosomal protein bL25 family. CTC subfamily. Part of the 50S ribosomal subunit; part of the 5S rRNA/L5/L18/L25 subcomplex. Contacts the 5S rRNA. Binds to the 5S rRNA independently of L5 and L18.

Functionally, this is one of the proteins that binds to the 5S RNA in the ribosome where it forms part of the central protuberance. The chain is Large ribosomal subunit protein bL25 from Clostridium tetani (strain Massachusetts / E88).